A 509-amino-acid polypeptide reads, in one-letter code: Transcription factor SOX-9 (509 aa).

Disordered stretches follow at residues 1–66 and 160–271; these read MNLL…ESEE and RLRV…IDFR. Residues 27-41 are compositionally biased toward low complexity; sequence SEGSRGSPCPSGSGS. The span at 42–52 shows a compositional bias: polar residues; that stretch reads DTENTRPQENT. 2 stretches are compositionally biased toward basic and acidic residues: residues 56–66 and 160–174; these read GEPDLKKESEE and RLRV…DYKY. The segment at 63–103 is dimerization (DIM); it reads ESEEDKFPVCIREAVSQVLKGYDWTLVPMPVRVNGSSKNKP. A PQA region spans residues 63-103; sequence ESEEDKFPVCIREAVSQVLKGYDWTLVPMPVRVNGSSKNKP. The residue at position 64 (S64) is a Phosphoserine. Positions 105 to 173 form a DNA-binding region, HMG box; the sequence is VKRPMNAFMV…QHKKDHPDYK (69 aa). Phosphoserine is present on S211. Residues 224 to 307 are transactivation domain (TAM); it reads PGEHSGQSQG…LPPNGHPGVP (84 aa). 2 short sequence motifs (9aaTAD) span residues 275–284 and 290–298; these read IGELSSDVIS and DVNEFDQYL. 2 disordered regions span residues 335–415 and 420–439; these read WMSK…QHSP and YSPF…TRSQ. A compositionally biased stretch (pro residues) spans 341-359; it reads APPPPPHPPQQPPPVPQAP. Positions 360–369 are enriched in low complexity; the sequence is AQPQAALPQQ. Over residues 380 to 415 the composition is skewed to polar residues; the sequence is HTLTTLSSEPGQSQRTHIKTEQLSPSHYSEQQQHSP. The tract at residues 394–509 is transactivation domain (TAC); it reads RTHIKTEQLS…QPVYTQLTRP (116 aa). Residue K398 forms a Glycyl lysine isopeptide (Lys-Gly) (interchain with G-Cter in ubiquitin) linkage. The short motif at 460–468 is the 9aaTAD 3 element; the sequence is SVLYSTFTY. The interval 479-509 is disordered; it reads PIADTSGVPSIPQTHSPQHWEQPVYTQLTRP. The segment covering 485 to 509 has biased composition (polar residues); sequence GVPSIPQTHSPQHWEQPVYTQLTRP.

In terms of assembly, homodimer; homodimerization is required for activity. Interacts (via C-terminus) with ZNF219; forming a complex that binds to the COL2A1 promoter and activates COL2A1 expression. Interacts with DDRGK1. Interacts with EP300/p300. Interacts with beta-catenin (CTNNB1); inhibiting CTNNB1 activity by competing with the binding sites of TCF/LEF within CTNNB1. In terms of processing, acetylated; acetylation impairs nuclear localization and ability to transactivate expression of target genes. Deacetylated by SIRT1. Phosphorylation at Ser-64 and Ser-211 by PKA increases transcriptional activity and may help delay chondrocyte maturation downstream of PTHLH/PTHrP signaling. Phosphorylation at either Ser-64 or Ser-211 is required for sumoylation, but phosphorylation is not dependent on sumoylation. Phosphorylated on tyrosine residues; tyrosine dephosphorylation by PTPN11/SHP2 blocks SOX9 phosphorylation by PKA and subsequent SUMOylation. Post-translationally, sumoylated; phosphorylation at either Ser-64 or Ser-211 is required for sumoylation. Sumoylation is induced by BMP signaling pathway. In terms of processing, ubiquitinated; ubiquitination leads to proteasomal degradation and is negatively regulated by DDRGK1.

The protein resides in the nucleus. Functionally, transcription factor that plays a key role in chondrocytes differentiation and skeletal development. Specifically binds the 5'-ACAAAG-3' DNA motif present in enhancers and super-enhancers and promotes expression of genes important for chondrogenesis, including cartilage matrix protein-coding genes COL2A1, COL4A2, COL9A1, COL11A2 and ACAN, SOX5 and SOX6. Also binds to some promoter regions. Plays a central role in successive steps of chondrocyte differentiation. Absolutely required for precartilaginous condensation, the first step in chondrogenesis during which skeletal progenitors differentiate into prechondrocytes. Together with SOX5 and SOX6, required for overt chondrogenesis when condensed prechondrocytes differentiate into early stage chondrocytes, the second step in chondrogenesis. Later, required to direct hypertrophic maturation and block osteoblast differentiation of growth plate chondrocytes: maintains chondrocyte columnar proliferation, delays prehypertrophy and then prevents osteoblastic differentiation of chondrocytes by lowering beta-catenin (CTNNB1) signaling and RUNX2 expression. Also required for chondrocyte hypertrophy, both indirectly, by keeping the lineage fate of chondrocytes, and directly, by remaining present in upper hypertrophic cells and transactivating COL10A1 along with MEF2C. Low lipid levels are the main nutritional determinant for chondrogenic commitment of skeletal progenitor cells: when lipids levels are low, FOXO (FOXO1 and FOXO3) transcription factors promote expression of SOX9, which induces chondrogenic commitment and suppresses fatty acid oxidation. Mechanistically, helps, but is not required, to remove epigenetic signatures of transcriptional repression and deposit active promoter and enhancer marks at chondrocyte-specific genes. Acts in cooperation with the Hedgehog pathway-dependent GLI (GLI1 and GLI3) transcription factors. In addition to cartilage development, also acts as a regulator of proliferation and differentiation in epithelial stem/progenitor cells: involved in the lung epithelium during branching morphogenesis, by balancing proliferation and differentiation and regulating the extracellular matrix. Controls epithelial branching during kidney development. In Sus scrofa (Pig), this protein is Transcription factor SOX-9 (SOX9).